Consider the following 137-residue polypeptide: Gonadotropin subunit beta-1 (137 aa).

The signal sequence occupies residues 1 to 24; it reads MYCTHLMTLQLVVMAMLWVTPVRA. Intrachain disulfides connect Cys-32/Cys-78, Cys-46/Cys-93, Cys-55/Cys-108, Cys-59/Cys-110, and Cys-113/Cys-120. Residue Asn-36 is glycosylated (N-linked (GlcNAc...) asparagine).

Belongs to the glycoprotein hormones subunit beta family. Heterodimer of an alpha and a beta chain.

The protein localises to the secreted. Functionally, involved in gametogenesis and steroidogenesis. In Oncorhynchus keta (Chum salmon), this protein is Gonadotropin subunit beta-1 (cgba).